Consider the following 368-residue polypeptide: Chaperone protein DnaJ (368 aa).

The J domain occupies aspartate 5–glycine 69. The CR-type zinc-finger motif lies at glycine 125–asparagine 207. Residues cysteine 138, cysteine 141, cysteine 155, cysteine 158, cysteine 181, cysteine 184, cysteine 195, and cysteine 198 each contribute to the Zn(2+) site. CXXCXGXG motif repeat units follow at residues cysteine 138–glycine 145, cysteine 155–glycine 162, cysteine 181–glycine 188, and cysteine 195–glycine 202.

This sequence belongs to the DnaJ family. In terms of assembly, homodimer. Requires Zn(2+) as cofactor.

It is found in the cytoplasm. Its function is as follows. Participates actively in the response to hyperosmotic and heat shock by preventing the aggregation of stress-denatured proteins and by disaggregating proteins, also in an autonomous, DnaK-independent fashion. Unfolded proteins bind initially to DnaJ; upon interaction with the DnaJ-bound protein, DnaK hydrolyzes its bound ATP, resulting in the formation of a stable complex. GrpE releases ADP from DnaK; ATP binding to DnaK triggers the release of the substrate protein, thus completing the reaction cycle. Several rounds of ATP-dependent interactions between DnaJ, DnaK and GrpE are required for fully efficient folding. Also involved, together with DnaK and GrpE, in the DNA replication of plasmids through activation of initiation proteins. This Exiguobacterium sibiricum (strain DSM 17290 / CCUG 55495 / CIP 109462 / JCM 13490 / 255-15) protein is Chaperone protein DnaJ.